The primary structure comprises 485 residues: uncharacterized protein (485 aa).

The next 3 helical transmembrane spans lie at 284 to 304, 328 to 348, and 353 to 373; these read LLAL…YPLF, LLDL…SFIK, and LALT…YNCL.

The protein belongs to the CBF/MAK21 family.

The protein localises to the membrane. This is an uncharacterized protein from Schizosaccharomyces pombe (strain 972 / ATCC 24843) (Fission yeast).